We begin with the raw amino-acid sequence, 219 residues long: Ribosomal RNA small subunit methyltransferase G (219 aa).

S-adenosyl-L-methionine-binding positions include glycine 85, leucine 90, 136 to 137 (VE), and arginine 151.

It belongs to the methyltransferase superfamily. RNA methyltransferase RsmG family.

The protein localises to the cytoplasm. The catalysed reaction is guanosine(527) in 16S rRNA + S-adenosyl-L-methionine = N(7)-methylguanosine(527) in 16S rRNA + S-adenosyl-L-homocysteine. Functionally, specifically methylates the N7 position of guanine in position 527 of 16S rRNA. The protein is Ribosomal RNA small subunit methyltransferase G of Cellvibrio japonicus (strain Ueda107) (Pseudomonas fluorescens subsp. cellulosa).